The sequence spans 746 residues: Exostosin-1 (746 aa).

Residues 1 to 7 (MQAKKRY) are Cytoplasmic-facing. The helical; Signal-anchor for type II membrane protein transmembrane segment at 8–28 (FILLSAGSCLALLFYFGGLQF) threads the bilayer. Residues 29 to 746 (RASRSHSRRE…RKKYRDIERL (718 aa)) lie on the Lumenal side of the membrane. The N-linked (GlcNAc...) asparagine glycan is linked to Asn-89. Intrachain disulfides connect Cys-98/Cys-103 and Cys-109/Cys-152. Leu-166 and Tyr-203 together coordinate a protein. Lys-267, Lys-269, Tyr-271, and Arg-280 together coordinate UDP. Residues Cys-298 and Cys-312 are joined by a disulfide bond. Residue His-300 coordinates a protein. Residues Tyr-319 and Tyr-324 each coordinate UDP. Residue Asn-330 is glycosylated (N-linked (GlcNAc...) asparagine). 2 cysteine pairs are disulfide-bonded: Cys-334-Cys-355 and Cys-652-Cys-704. UDP is bound by residues Arg-346 and Glu-349.

It belongs to the glycosyltransferase 47 family. Part of the heparan sulfate polymerase, a dimeric complex composed of EXT1 and EXT2. Could also form homooligomeric complexes. Interacts with NDST1. N-glycosylated.

The protein resides in the golgi apparatus membrane. It localises to the golgi apparatus. Its subcellular location is the cis-Golgi network membrane. The protein localises to the endoplasmic reticulum membrane. The enzyme catalyses 3-O-{alpha-D-GlcNAc-[(1-&gt;4)-beta-D-GlcA-(1-&gt;4)-alpha-D-GlcNAc](n)-(1-&gt;4)-beta-D-GlcA-(1-&gt;3)-beta-D-Gal-(1-&gt;3)-beta-D-Gal-(1-&gt;4)-beta-D-Xyl}-L-seryl-[protein] + UDP-alpha-D-glucuronate = 3-O-{[(1-&gt;4)-beta-D-GlcA-(1-&gt;4)-alpha-D-GlcNAc](n+1)-(1-&gt;4)-beta-D-GlcA-(1-&gt;3)-beta-D-Gal-(1-&gt;3)-beta-D-Gal-(1-&gt;4)-beta-D-Xyl}-L-seryl-[protein] + UDP + H(+). It functions in the pathway protein modification; protein glycosylation. In terms of biological role, glycosyltransferase forming with EXT2 the heterodimeric heparan sulfate polymerase which catalyzes the elongation of the heparan sulfate glycan backbone. Glycan backbone extension consists in the alternating transfer of (1-&gt;4)-beta-D-GlcA and (1-&gt;4)-alpha-D-GlcNAc residues from their respective UDP-sugar donors. Both EXT1 and EXT2 are required for the full activity of the polymerase since EXT1 bears the N-acetylglucosaminyl-proteoglycan 4-beta-glucuronosyltransferase activity within the complex while EXT2 carries the glucuronosyl-N-acetylglucosaminyl-proteoglycan 4-alpha-N-acetylglucosaminyltransferase activity. Heparan sulfate proteoglycans are ubiquitous components of the extracellular matrix and play an important role in tissue homeostasis and signaling. This is Exostosin-1 (EXT1) from Pongo abelii (Sumatran orangutan).